The primary structure comprises 461 residues: Phosphoglucosamine mutase (461 aa).

Ser-107 functions as the Phosphoserine intermediate in the catalytic mechanism. Positions 107, 254, 256, and 258 each coordinate Mg(2+). A Phosphoserine modification is found at Ser-107.

Belongs to the phosphohexose mutase family. It depends on Mg(2+) as a cofactor. Activated by phosphorylation.

It catalyses the reaction alpha-D-glucosamine 1-phosphate = D-glucosamine 6-phosphate. Functionally, catalyzes the conversion of glucosamine-6-phosphate to glucosamine-1-phosphate. The protein is Phosphoglucosamine mutase of Bifidobacterium longum (strain DJO10A).